Consider the following 316-residue polypeptide: MAIYADNSYSIGNTPLVRLKHFGHNGNVVVKIEGRNPSYSVKCRIGANMVWQAEKDGTLTKGKEIVDATSGNTGIALAYVAAARGYKITLTMPETMSLERKRLLCGLGVNLVLTEGAKGMKGAIAKAEEIVASDPSRYVMLKQFENPANPQIHRETTGPEIWKDTDGKVDVVVAGVGTGGSITGISRAIKLDFGKQITSVAVEPVESPVISQTLAGEEVKPGPHKIQGIGAGFIPKNLDLSIIDRVETVDSDTALATARRLMAEEGILAGISSGAAVAAADRLAKLPEFADKLIVVILPSASERYLSTALFEGIEG.

Hydrogen sulfide contacts are provided by Asn7 and Arg35. Position 42 is an N6-(pyridoxal phosphate)lysine (Lys42). Pyridoxal 5'-phosphate-binding positions include Asn72 and 177 to 181 (GTGGS). Hydrogen sulfide is bound at residue Leu268. Ser272 is a binding site for pyridoxal 5'-phosphate.

It belongs to the cysteine synthase/cystathionine beta-synthase family. As to quaternary structure, homodimer. It depends on pyridoxal 5'-phosphate as a cofactor.

The catalysed reaction is O-acetyl-L-serine + hydrogen sulfide = L-cysteine + acetate. It functions in the pathway amino-acid biosynthesis; L-cysteine biosynthesis; L-cysteine from L-serine: step 2/2. The sequence is that of Cysteine synthase (cysK) from Haemophilus influenzae (strain ATCC 51907 / DSM 11121 / KW20 / Rd).